Consider the following 37-residue polypeptide: Mu-agatoxin-Aa1d (37 aa).

Intrachain disulfides connect Cys2-Cys18, Cys9-Cys23, Cys17-Cys33, and Cys25-Cys31. Asn37 is modified (asparagine amide).

It belongs to the neurotoxin 07 (Beta/delta-agtx) family. 03 (aga-4) subfamily. Aga sub-subfamily. Expressed by the venom gland.

Its subcellular location is the secreted. In terms of biological role, insecticidal neurotoxin that induces an irreversible spastic paralysis when injected into insects. Modifies presynaptic voltage-gated sodium channels (Nav), causing them to open at the normal resting potential of the nerve. This leads to spontaneous release of neurotransmitter and repetitive action potentials in motor neurons. The sequence is that of Mu-agatoxin-Aa1d from Agelenopsis aperta (North American funnel-web spider).